The chain runs to 258 residues: 6-carboxyhexanoate--CoA ligase (258 aa).

Belongs to the BioW family. As to quaternary structure, homodimer. Mg(2+) serves as cofactor.

The enzyme catalyses heptanedioate + ATP + CoA = 6-carboxyhexanoyl-CoA + AMP + diphosphate. It functions in the pathway metabolic intermediate metabolism; pimeloyl-CoA biosynthesis; pimeloyl-CoA from pimelate: step 1/1. Catalyzes the transformation of pimelate into pimeloyl-CoA with concomitant hydrolysis of ATP to AMP. This is 6-carboxyhexanoate--CoA ligase from Bacillus atrophaeus (strain 1942).